The primary structure comprises 338 residues: NADPH dehydrogenase (338 aa).

22 to 25 (SPMC) serves as a coordination point for FMN. A substrate-binding site is contributed by tyrosine 27. FMN-binding residues include alanine 59 and glutamine 101. Position 163–166 (163–166 (HAAH)) interacts with substrate. FMN is bound by residues arginine 214 and 306–307 (GR).

It belongs to the NADH:flavin oxidoreductase/NADH oxidase family. NamA subfamily. Homotetramer. The cofactor is FMN.

The enzyme catalyses A + NADPH + H(+) = AH2 + NADP(+). Its function is as follows. Catalyzes the reduction of the double bond of an array of alpha,beta-unsaturated aldehydes and ketones. It also reduces the nitro group of nitroester and nitroaromatic compounds. It could have a role in detoxification processes. This Listeria monocytogenes serotype 4a (strain HCC23) protein is NADPH dehydrogenase.